Here is a 422-residue protein sequence, read N- to C-terminus: Vitamin D3 receptor (422 aa).

Residues 22–90 (PRICGVCGDK…RLKRCVDIGM (69 aa)) constitute a DNA-binding region (nuclear receptor). Cysteine 25, cysteine 28, cysteine 42, cysteine 45, cysteine 61, cysteine 67, cysteine 77, and cysteine 80 together coordinate Zn(2+). 2 consecutive NR C4-type zinc fingers follow at residues 25 to 45 (CGVC…CEGC) and 61 to 85 (CPFN…LKRC). Residues 98-127 (DEEVQRKRQMINKRKSEEALKESMRPKISD) form a hinge region. One can recognise an NR LBD domain in the interval 128-418 (EQQKMIDILL…LTPLMLEVFS (291 aa)). Residues 170-191 (RSSSVHTQGSPSEDSDVFTSSP) are disordered. Residue serine 232 participates in calcitriol binding. The tract at residues 241–259 (KMIPGFRDLIAEDQIALLK) is interaction with coactivator LXXLL motif. Arginine 269, serine 273, histidine 300, and histidine 392 together coordinate calcitriol. The short motif at 411–419 (PLMLEVFSD) is the 9aaTAD element.

It belongs to the nuclear hormone receptor family. NR1 subfamily. As to quaternary structure, homodimer in the absence of bound vitamin D3. Heterodimer with RXRA after vitamin D3 binding. In terms of tissue distribution, detected in all tissues examined. Highest level in small intestine and skin.

The protein localises to the nucleus. It localises to the cytoplasm. Functionally, nuclear receptor for calcitriol, the active form of vitamin D3 which mediates the action of this vitamin on cells. Enters the nucleus upon vitamin D3 binding where it forms heterodimers with the retinoid X receptor/RXR. The VDR-RXR heterodimers bind to specific response elements on DNA and activate the transcription of vitamin D3-responsive target genes. Plays a central role in calcium homeostasis. Also functions as a receptor for the secondary bile acid lithocholic acid (LCA) and its metabolites. The sequence is that of Vitamin D3 receptor (vdr) from Xenopus laevis (African clawed frog).